A 308-amino-acid chain; its full sequence is Dual oxidase maturation factor 1 (308 aa).

The Extracellular segment spans residues 1-21 (MQANIFPFYPQPRTSFKFDTK). A helical transmembrane segment spans residues 22-42 (IIEIIIICIVTACTFIIILPG). Topologically, residues 43–49 (IRGKSRS) are cytoplasmic. A helical membrane pass occupies residues 50-70 (IWLFRILTSLFIGAVILAVNF). Over 71–172 (TSDWETGIVT…SPCGLFQQYC (102 aa)) the chain is Extracellular. Asn94, Asn107, and Asn119 each carry an N-linked (GlcNAc...) asparagine glycan. A helical membrane pass occupies residues 173 to 195 (ISTYYSSEIMWVAFGSWILYNVL). Residues 196 to 199 (FSMP) are Cytoplasmic-facing. A helical transmembrane segment spans residues 200–220 (VILYGICMMFVTAICMLVSLI). Residues 221 to 247 (SFASVRQAPVCNIHFGNAVLKTHFGVS) lie on the Extracellular side of the membrane. The helical transmembrane segment at 248–268 (YWLSLVTGLFCLIVSLVLLFL) threads the bilayer. The Cytoplasmic segment spans residues 269-308 (YKTQPKVIRLIFSYGEEEDLSDKSENEEEHSSALSLNEML).

Belongs to the DUOXA family.

It localises to the membrane. In terms of biological role, possible role in maturation and transport from the endoplasmic reticulum to the plasma membrane of functional dual oxidase. The protein is Dual oxidase maturation factor 1 (duoxa1) of Xenopus tropicalis (Western clawed frog).